The primary structure comprises 161 residues: Phosphopantetheine adenylyltransferase (161 aa).

Serine 11 is a binding site for substrate. Residues 11–12 (SF) and histidine 19 each bind ATP. Residues lysine 43, leucine 75, and arginine 89 each coordinate substrate. Residues 90–92 (GLR), glutamate 100, and 125–131 (YSFISSS) contribute to the ATP site.

Belongs to the bacterial CoaD family. As to quaternary structure, homohexamer. It depends on Mg(2+) as a cofactor.

The protein resides in the cytoplasm. The catalysed reaction is (R)-4'-phosphopantetheine + ATP + H(+) = 3'-dephospho-CoA + diphosphate. It functions in the pathway cofactor biosynthesis; coenzyme A biosynthesis; CoA from (R)-pantothenate: step 4/5. Its function is as follows. Reversibly transfers an adenylyl group from ATP to 4'-phosphopantetheine, yielding dephospho-CoA (dPCoA) and pyrophosphate. This chain is Phosphopantetheine adenylyltransferase, found in Staphylococcus haemolyticus (strain JCSC1435).